Here is a 341-residue protein sequence, read N- to C-terminus: TERF1-interacting nuclear factor 2 (341 aa).

Ala-2 bears the N-acetylalanine mark. The TBM signature appears at His-243 to Cys-265. The Nuclear localization signal motif lies at Pro-249–Ser-255. The segment at Pro-283 to Val-341 is disordered.

In terms of assembly, monomer. Found in a complex with POT1; TERF1 and TNKS1. Component of the shelterin complex (telosome) composed of TERF1, TERF2, TINF2, TERF2IP, ACD and POT1. Interacts with TERF1.

It localises to the nucleus. The protein localises to the chromosome. Its subcellular location is the telomere. Its function is as follows. Component of the shelterin complex (telosome) that is involved in the regulation of telomere length and protection. Shelterin associates with arrays of double-stranded TTAGGG repeats added by telomerase and protects chromosome ends; without its protective activity, telomeres are no longer hidden from the DNA damage surveillance and chromosome ends are inappropriately processed by DNA repair pathways. Plays a role in shelterin complex assembly. The sequence is that of TERF1-interacting nuclear factor 2 (Tinf2) from Mus musculus (Mouse).